The following is an 812-amino-acid chain: ATP-dependent DNA helicase PIF3 (812 aa).

An ATP-binding site is contributed by 247–254; that stretch reads GSAGTGKT. Residues 741 to 761 mediate DNA binding; that stretch reads HLVYVACSRVRSMDQLIVRNV.

It belongs to the helicase family. PIF1 subfamily. As to quaternary structure, monomer. Mg(2+) serves as cofactor.

The protein resides in the cytoplasm. The catalysed reaction is Couples ATP hydrolysis with the unwinding of duplex DNA at the replication fork by translocating in the 5'-3' direction. This creates two antiparallel DNA single strands (ssDNA). The leading ssDNA polymer is the template for DNA polymerase III holoenzyme which synthesizes a continuous strand.. The enzyme catalyses ATP + H2O = ADP + phosphate + H(+). Functionally, DNA-dependent ATPase and 5'-3' DNA helicase required for the maintenance of genome stability. The protein is ATP-dependent DNA helicase PIF3 of Trypanosoma brucei brucei (strain 927/4 GUTat10.1).